The sequence spans 561 residues: Long-chain-fatty-acid--CoA ligase (561 aa).

213–224 (YTGGTTGVAKGA) lines the ATP pocket.

The protein belongs to the ATP-dependent AMP-binding enzyme family. The cofactor is Mg(2+).

It is found in the membrane. The catalysed reaction is a long-chain fatty acid + ATP + CoA = a long-chain fatty acyl-CoA + AMP + diphosphate. It participates in lipid metabolism; fatty acid beta-oxidation. Functionally, catalyzes the esterification, concomitant with transport, of exogenous long-chain fatty acids into metabolically active CoA thioesters for subsequent degradation or incorporation into phospholipids. The chain is Long-chain-fatty-acid--CoA ligase (fadD) from Salmonella typhi.